A 432-amino-acid chain; its full sequence is Septin-11 (432 aa).

Alanine 2 bears the N-acetylalanine mark. Serine 9 carries the phosphoserine modification. The region spanning 38-304 (QGFCFNILCV…ELYRRCKLEE (267 aa)) is the Septin-type G domain. The interval 48–55 (GETGIGKS) is G1 motif. GTP is bound by residues 48–55 (GETGIGKS), glycine 103, 184–192 (KADTIAKNE), glycine 238, and arginine 253. Positions 100-103 (DTVG) are G3 motif. A G4 motif region spans residues 183-186 (AKAD). Residues 320-413 (QETYEAKRNE…LLQSQAQQSG (94 aa)) adopt a coiled-coil conformation. The segment covering 403–416 (QLLQSQAQQSGAQQ) has biased composition (low complexity). The segment at 403–432 (QLLQSQAQQSGAQQTKKDKDKKNSPWLCTE) is disordered.

The protein belongs to the TRAFAC class TrmE-Era-EngA-EngB-Septin-like GTPase superfamily. Septin GTPase family. In terms of assembly, septins polymerize into heterooligomeric protein complexes that form filaments, and can associate with cellular membranes, actin filaments and microtubules. Forms homooligomers. GTPase activity is required for filament formation. Interacts with SEPTIN7, SEPTIN9 and SEPTIN12.

The protein localises to the cytoplasm. It is found in the cytoskeleton. Its subcellular location is the synapse. The protein resides in the cell projection. It localises to the dendritic spine. The protein localises to the axon. In terms of biological role, filament-forming cytoskeletal GTPase. May play a role in cytokinesis (Potential). May play a role in the cytoarchitecture of neurons, including dendritic arborization and dendritic spines, and in GABAergic synaptic connectivity. The protein is Septin-11 of Macaca fascicularis (Crab-eating macaque).